We begin with the raw amino-acid sequence, 518 residues long: Protein nucleotidyltransferase YdiU (518 aa).

Over residues 1 to 10 (MTHLRFDNRL) the composition is skewed to basic and acidic residues. Residues 1 to 23 (MTHLRFDNRLRQQLPGDPEEGSR) form a disordered region. ATP contacts are provided by Gly-100, Gly-102, Arg-103, Lys-123, Asp-135, Gly-136, Arg-193, and Arg-200. The active-site Proton acceptor is Asp-270. Residues Asn-271 and Asp-280 each coordinate Mg(2+). Asp-280 serves as a coordination point for ATP.

Belongs to the SELO family. The cofactor is Mg(2+). Mn(2+) serves as cofactor.

It carries out the reaction L-seryl-[protein] + ATP = 3-O-(5'-adenylyl)-L-seryl-[protein] + diphosphate. The catalysed reaction is L-threonyl-[protein] + ATP = 3-O-(5'-adenylyl)-L-threonyl-[protein] + diphosphate. The enzyme catalyses L-tyrosyl-[protein] + ATP = O-(5'-adenylyl)-L-tyrosyl-[protein] + diphosphate. It catalyses the reaction L-histidyl-[protein] + UTP = N(tele)-(5'-uridylyl)-L-histidyl-[protein] + diphosphate. It carries out the reaction L-seryl-[protein] + UTP = O-(5'-uridylyl)-L-seryl-[protein] + diphosphate. The catalysed reaction is L-tyrosyl-[protein] + UTP = O-(5'-uridylyl)-L-tyrosyl-[protein] + diphosphate. Nucleotidyltransferase involved in the post-translational modification of proteins. It can catalyze the addition of adenosine monophosphate (AMP) or uridine monophosphate (UMP) to a protein, resulting in modifications known as AMPylation and UMPylation. The sequence is that of Protein nucleotidyltransferase YdiU from Xanthomonas axonopodis pv. citri (strain 306).